Consider the following 562-residue polypeptide: Dihydroxy-acid dehydratase (562 aa).

Residue cysteine 51 coordinates [2Fe-2S] cluster. Aspartate 83 is a binding site for Mg(2+). Cysteine 124 contacts [2Fe-2S] cluster. Residues aspartate 125 and lysine 126 each coordinate Mg(2+). Position 126 is an N6-carboxylysine (lysine 126). A [2Fe-2S] cluster-binding site is contributed by cysteine 196. Glutamate 448 serves as a coordination point for Mg(2+). Serine 474 (proton acceptor) is an active-site residue.

Belongs to the IlvD/Edd family. In terms of assembly, homodimer. The cofactor is [2Fe-2S] cluster. Mg(2+) serves as cofactor.

The catalysed reaction is (2R)-2,3-dihydroxy-3-methylbutanoate = 3-methyl-2-oxobutanoate + H2O. The enzyme catalyses (2R,3R)-2,3-dihydroxy-3-methylpentanoate = (S)-3-methyl-2-oxopentanoate + H2O. Its pathway is amino-acid biosynthesis; L-isoleucine biosynthesis; L-isoleucine from 2-oxobutanoate: step 3/4. The protein operates within amino-acid biosynthesis; L-valine biosynthesis; L-valine from pyruvate: step 3/4. In terms of biological role, functions in the biosynthesis of branched-chain amino acids. Catalyzes the dehydration of (2R,3R)-2,3-dihydroxy-3-methylpentanoate (2,3-dihydroxy-3-methylvalerate) into 2-oxo-3-methylpentanoate (2-oxo-3-methylvalerate) and of (2R)-2,3-dihydroxy-3-methylbutanoate (2,3-dihydroxyisovalerate) into 2-oxo-3-methylbutanoate (2-oxoisovalerate), the penultimate precursor to L-isoleucine and L-valine, respectively. The protein is Dihydroxy-acid dehydratase of Pyrobaculum aerophilum (strain ATCC 51768 / DSM 7523 / JCM 9630 / CIP 104966 / NBRC 100827 / IM2).